A 470-amino-acid chain; its full sequence is Auxin transporter-like protein 3 (470 aa).

Residues 1-57 (MAAEKIETVVAGNYLEMEREEENISGNKKSSTKTKLSNFFWHGGSVYDAWFSCASNQ) lie on the Cytoplasmic side of the membrane. The chain crosses the membrane as a helical span at residues 58 to 75 (VAQVLLTLPYSFSQLGMM). Residues 76-77 (SG) are Extracellular-facing. The chain crosses the membrane as a helical span at residues 78 to 98 (ILFQLFYGLMGSWTAYLISVL). Residues 99-134 (YVEYRTRKEREKFDFRNHVIQWFEVLDGLLGKHWRN) lie on the Cytoplasmic side of the membrane. A helical transmembrane segment spans residues 135-155 (LGLIFNCTFLLFGSVIQLIAC). Residues 156–170 (ASNIYYINDKLDKRT) lie on the Extracellular side of the membrane. Residues 171-191 (WTYIFGACCATTVFIPSFHNY) traverse the membrane as a helical segment. Position 192 (R192) is a topological domain, cytoplasmic. Residues 193–213 (IWSFLGLAMTTYTSWYLTIAS) traverse the membrane as a helical segment. Topologically, residues 214-230 (LLHGQAEDVKHSGPTTM) are extracellular. Residues 231–251 (VLYFTGATNILYTFGGHAVTV) traverse the membrane as a helical segment. Residues 252-264 (EIMHAMWKPQKFK) lie on the Cytoplasmic side of the membrane. Residues 265–285 (AIYLLATIYVLTLTLPSASAV) form a helical membrane-spanning segment. The Extracellular segment spans residues 286–312 (YWAFGDKLLTHSNALSLLPKTGFRDTA). A helical membrane pass occupies residues 313–333 (VILMLIHQFITFGFASTPLYF). Over 334–354 (VWEKLIGVHETKSMFKRAMAR) the chain is Cytoplasmic. A helical transmembrane segment spans residues 355-375 (LPVVVPIWFLAIIFPFFGPIN). Residue S376 is a topological domain, extracellular. A helical transmembrane segment spans residues 377-397 (AVGSLLVSFTVYIIPALAHML). Topologically, residues 398-426 (TFAPAPSRENAVERPPRVVGGWMGTYCIN) are cytoplasmic. A helical membrane pass occupies residues 427 to 447 (IFVVVWVFVVGFGFGGWASMV). Residues 448-470 (NFVRQIDTFGLFTKCYQCPPHKP) are Extracellular-facing.

Belongs to the amino acid/polyamine transporter 2 family. Amino acid/auxin permease (AAAP) (TC 2.A.18.1) subfamily.

The protein localises to the cell membrane. Carrier protein involved in proton-driven auxin influx. Mediates the formation of auxin gradient from developing leaves (site of auxin biosynthesis) to tips by contributing to the loading of auxin in vascular tissues and facilitating acropetal (base to tip) auxin transport within inner tissues of the root apex, and basipetal (tip to base) auxin transport within outer tissues of the root apex. This chain is Auxin transporter-like protein 3 (LAX3), found in Arabidopsis thaliana (Mouse-ear cress).